Reading from the N-terminus, the 580-residue chain is Trafficking protein particle complex subunit 14 (580 aa).

Disordered regions lie at residues 90–138 (GMPG…ATTL) and 480–533 (VSHP…RSGS). Over residues 105–116 (PGGGDPGGGGLF) the composition is skewed to gly residues. Positions 124 to 137 (THGPGPATSGGATT) are enriched in low complexity. Serine 491 bears the Phosphoserine mark. Positions 492 to 502 (RKSSPSSPAVR) are enriched in low complexity. Over residues 512–525 (LGRSQSFSHQQPSR) the composition is skewed to polar residues. Position 517 is a phosphoserine (serine 517). Position 541 is a phosphothreonine (threonine 541). Position 546 is a phosphoserine (serine 546).

Component of the multisubunit TRAPP II complex, which includes at least TRAPPC1, TRAPPC2, TRAPPC2L, TRAPPC3, TRAPPC4, TRAPPC5, TRAPPC6A/B, TRAPPC9, TRAPPC10 and TRAPPC14. TRAPPC9, TRAPPC10 and TRAPPC14 are specific subunits of the TRAPP II complex. Interacts with alpha-tubulin during mitosis. Interacts with RAB3IP (via the N-terminal region); this interaction mediates RAB3IP association with the TRAPP II complex. Interacts with TRAPPC10. Interacts with FBF1. Broadly expressed. High levels in brain, cerebellum, testis and whole blood.

The protein resides in the cytoplasm. It is found in the cytoskeleton. Its subcellular location is the spindle. The protein localises to the vesicle. It localises to the midbody. Its function is as follows. Specific subunit of the TRAPP (transport protein particle) II complex, a highly conserved vesicle tethering complex that functions in late Golgi trafficking as a membrane tether. TRAPP II complex also has GEF activity toward RAB1A. TRAPPC14 is dispensable for TRAPPII complex integrity but mediates RAB3IP preciliary vesicle trafficking to the mother centriole during ciliogenesis. Modulates YAP1 activity as transcriptional regulator. This Homo sapiens (Human) protein is Trafficking protein particle complex subunit 14.